The following is a 446-amino-acid chain: Tubulin beta-1 chain (446 aa).

GTP is bound by residues Gln11, Glu69, Ser138, Gly142, Thr143, Gly144, Asn204, and Asn226. Position 69 (Glu69) interacts with Mg(2+). A disordered region spans residues 422–446 (YQQYQDATADEEGEYEDEEEGDLQD). Over residues 429–446 (TADEEGEYEDEEEGDLQD) the composition is skewed to acidic residues.

Belongs to the tubulin family. As to quaternary structure, dimer of alpha and beta chains. A typical microtubule is a hollow water-filled tube with an outer diameter of 25 nm and an inner diameter of 15 nM. Alpha-beta heterodimers associate head-to-tail to form protofilaments running lengthwise along the microtubule wall with the beta-tubulin subunit facing the microtubule plus end conferring a structural polarity. Microtubules usually have 13 protofilaments but different protofilament numbers can be found in some organisms and specialized cells. The cofactor is Mg(2+). As to expression, found in areas of rapidly dividing tissues.

It is found in the cytoplasm. The protein localises to the cytoskeleton. In terms of biological role, tubulin is the major constituent of microtubules, a cylinder consisting of laterally associated linear protofilaments composed of alpha- and beta-tubulin heterodimers. Microtubules grow by the addition of GTP-tubulin dimers to the microtubule end, where a stabilizing cap forms. Below the cap, tubulin dimers are in GDP-bound state, owing to GTPase activity of alpha-tubulin. The chain is Tubulin beta-1 chain (TUBB1) from Zea mays (Maize).